The following is a 118-amino-acid chain: Large ribosomal subunit protein bL20 (118 aa).

Belongs to the bacterial ribosomal protein bL20 family.

Binds directly to 23S ribosomal RNA and is necessary for the in vitro assembly process of the 50S ribosomal subunit. It is not involved in the protein synthesizing functions of that subunit. In Cupriavidus metallidurans (strain ATCC 43123 / DSM 2839 / NBRC 102507 / CH34) (Ralstonia metallidurans), this protein is Large ribosomal subunit protein bL20.